The primary structure comprises 79 residues: Large ribosomal subunit protein uL30 (79 aa).

This sequence belongs to the universal ribosomal protein uL30 family. As to quaternary structure, part of the 50S ribosomal subunit.

The chain is Large ribosomal subunit protein uL30 from Anaeromyxobacter sp. (strain Fw109-5).